We begin with the raw amino-acid sequence, 261 residues long: Segregation and condensation protein A (261 aa).

The protein belongs to the ScpA family. In terms of assembly, component of a cohesin-like complex composed of ScpA, ScpB and the Smc homodimer, in which ScpA and ScpB bind to the head domain of Smc. The presence of the three proteins is required for the association of the complex with DNA.

It localises to the cytoplasm. Participates in chromosomal partition during cell division. May act via the formation of a condensin-like complex containing Smc and ScpB that pull DNA away from mid-cell into both cell halves. The polypeptide is Segregation and condensation protein A (Ligilactobacillus salivarius (strain UCC118) (Lactobacillus salivarius)).